The primary structure comprises 410 residues: F-box protein At3g19890 (410 aa).

The F-box domain occupies 2-49; the sequence is TMISDLSKDLVEEILSKAPITSLGAVRSTHKQWNALSKGRLLYKAEAK. The interval 386–410 is disordered; sequence EDKCKSIKMVDTKRQRKKRKRKSKR. A compositionally biased stretch (basic and acidic residues) spans 387–398; sequence DKCKSIKMVDTK. The segment covering 399–410 has biased composition (basic residues); it reads RQRKKRKRKSKR.

This chain is F-box protein At3g19890, found in Arabidopsis thaliana (Mouse-ear cress).